The following is a 303-amino-acid chain: Indole-3-glycerol phosphate synthase (303 aa).

This sequence belongs to the TrpC family.

The enzyme catalyses 1-(2-carboxyphenylamino)-1-deoxy-D-ribulose 5-phosphate + H(+) = (1S,2R)-1-C-(indol-3-yl)glycerol 3-phosphate + CO2 + H2O. It participates in amino-acid biosynthesis; L-tryptophan biosynthesis; L-tryptophan from chorismate: step 4/5. In Acaryochloris marina (strain MBIC 11017), this protein is Indole-3-glycerol phosphate synthase.